A 527-amino-acid polypeptide reads, in one-letter code: Peptide chain release factor 3 (527 aa).

Positions 9 to 277 (AKRRTFAIIS…AVVDWAPRPL (269 aa)) constitute a tr-type G domain. GTP is bound by residues 18 to 25 (SHPDAGKT), 86 to 90 (DTPGH), and 140 to 143 (NKLD).

The protein belongs to the TRAFAC class translation factor GTPase superfamily. Classic translation factor GTPase family. PrfC subfamily.

It is found in the cytoplasm. Functionally, increases the formation of ribosomal termination complexes and stimulates activities of RF-1 and RF-2. It binds guanine nucleotides and has strong preference for UGA stop codons. It may interact directly with the ribosome. The stimulation of RF-1 and RF-2 is significantly reduced by GTP and GDP, but not by GMP. The polypeptide is Peptide chain release factor 3 (Ectopseudomonas mendocina (strain ymp) (Pseudomonas mendocina)).